The chain runs to 238 residues: Ubiquinone biosynthesis O-methyltransferase (238 aa).

Arg-40, Gly-59, Asp-80, and Met-125 together coordinate S-adenosyl-L-methionine.

Belongs to the methyltransferase superfamily. UbiG/COQ3 family.

The enzyme catalyses a 3-demethylubiquinol + S-adenosyl-L-methionine = a ubiquinol + S-adenosyl-L-homocysteine + H(+). It catalyses the reaction a 3-(all-trans-polyprenyl)benzene-1,2-diol + S-adenosyl-L-methionine = a 2-methoxy-6-(all-trans-polyprenyl)phenol + S-adenosyl-L-homocysteine + H(+). It functions in the pathway cofactor biosynthesis; ubiquinone biosynthesis. O-methyltransferase that catalyzes the 2 O-methylation steps in the ubiquinone biosynthetic pathway. This Paracidovorax citrulli (strain AAC00-1) (Acidovorax citrulli) protein is Ubiquinone biosynthesis O-methyltransferase.